Consider the following 241-residue polypeptide: 3-dehydroquinate dehydratase (241 aa).

3-dehydroquinate contacts are provided by residues 35 to 37 (ELR) and Arg70. His132 functions as the Proton donor/acceptor in the catalytic mechanism. Lys159 (schiff-base intermediate with substrate) is an active-site residue. Residues Arg201 and Gln224 each coordinate 3-dehydroquinate.

It belongs to the type-I 3-dehydroquinase family. In terms of assembly, homodimer.

The enzyme catalyses 3-dehydroquinate = 3-dehydroshikimate + H2O. Its pathway is metabolic intermediate biosynthesis; chorismate biosynthesis; chorismate from D-erythrose 4-phosphate and phosphoenolpyruvate: step 3/7. Involved in the third step of the chorismate pathway, which leads to the biosynthesis of aromatic amino acids. Catalyzes the cis-dehydration of 3-dehydroquinate (DHQ) and introduces the first double bond of the aromatic ring to yield 3-dehydroshikimate. The polypeptide is 3-dehydroquinate dehydratase (Staphylococcus carnosus (strain TM300)).